The primary structure comprises 243 residues: NAD-dependent protein deacetylase (243 aa).

The region spanning 1–243 (MRNDLETLKH…VSVVKSLMTE (243 aa)) is the Deacetylase sirtuin-type domain. NAD(+)-binding residues include Ala24, Phe35, Arg36, Gln105, Ile107, Asp108, and His123. Phe35 provides a ligand contact to nicotinamide. Residues Ile107 and Asp108 each contribute to the nicotinamide site. Catalysis depends on His123, which acts as the Proton acceptor. Cys131, Cys134, Cys151, and Cys154 together coordinate Zn(2+). Residues Ser192, Ser193, Asn215, and Asp232 each contribute to the NAD(+) site.

This sequence belongs to the sirtuin family. Class U subfamily. Requires Zn(2+) as cofactor.

The protein resides in the cytoplasm. The enzyme catalyses N(6)-acetyl-L-lysyl-[protein] + NAD(+) + H2O = 2''-O-acetyl-ADP-D-ribose + nicotinamide + L-lysyl-[protein]. Its function is as follows. NAD-dependent protein deacetylase which modulates the activities of several enzymes which are inactive in their acetylated form. This Staphylococcus aureus (strain MSSA476) protein is NAD-dependent protein deacetylase.